The sequence spans 710 residues: Ribonuclease R (710 aa).

The RNB domain occupies 246 to 573 (RKDLRDKVIV…VHRLLKLYLE (328 aa)). One can recognise an S1 motif domain in the interval 625-705 (GEVFNVVVTN…IRGEIDFVLV (81 aa)).

Belongs to the RNR ribonuclease family. RNase R subfamily.

The protein localises to the cytoplasm. It catalyses the reaction Exonucleolytic cleavage in the 3'- to 5'-direction to yield nucleoside 5'-phosphates.. 3'-5' exoribonuclease that releases 5'-nucleoside monophosphates and is involved in maturation of structured RNAs. In Thermotoga maritima (strain ATCC 43589 / DSM 3109 / JCM 10099 / NBRC 100826 / MSB8), this protein is Ribonuclease R.